We begin with the raw amino-acid sequence, 327 residues long: Aquaporin-1 (327 aa).

The tract at residues 1 to 34 (MSSNDSNDTDKQHTRLDPTGVDDAYIPPEQPETK) is disordered. The Cytoplasmic segment spans residues 1-48 (MSSNDSNDTDKQHTRLDPTGVDDAYIPPEQPETKHHRFKISKDTLRNH). A helical membrane pass occupies residues 49–69 (FIAAAGEFCGTFMFLWCAYVI). Over 70–91 (CNVANHDVALVAAPDGSHPGQL) the chain is Extracellular. Residues 92 to 112 (IMIAIGFGFSVMFSIWCFAGV) traverse the membrane as a helical segment. Residues 113 to 136 (SGGALNPAVSLSLCLARAVSPTRC) are Cytoplasmic-facing. Positions 118-120 (NPA) match the NPA 1 motif. Residues 137 to 157 (VVMWVSQIVAGMAAGGAASAM) form a helical membrane-spanning segment. The Extracellular portion of the chain corresponds to 158 to 176 (TPGEVLFANSLGLGCSRTR). Residues 177 to 197 (GLFLEMFGTAILCLTVLMTAV) form a helical membrane-spanning segment. Over 198 to 203 (EKRETN) the chain is Cytoplasmic. The chain crosses the membrane as a helical span at residues 204–224 (FMAALPIGISLFIAHVALTAY). Residues 225-248 (TGTGVNPARSLGAAVAARYFPHYH) lie on the Extracellular side of the membrane. Residues 230–232 (NPA) carry the NPA 2 motif. Residues 249–269 (WIYWIGPLLGSILAWSVWQLL) form a helical membrane-spanning segment. Residues 270 to 327 (QILDYTTYVTAEKAASTKEKAQKKVKPAVPLLWLKSNFSLLFFISRSLALNVIIFGKN) lie on the Cytoplasmic side of the membrane.

It belongs to the MIP/aquaporin (TC 1.A.8) family.

It is found in the endoplasmic reticulum membrane. The protein localises to the cell membrane. Functionally, water channel required to facilitate the transport of water across membranes. Involved in sporulation, freeze tolerance and osmotolerance. Is non-functional in most laboratory strains. The sequence is that of Aquaporin-1 (AQY1) from Saccharomyces cerevisiae (strain Lalvin EC1118 / Prise de mousse) (Baker's yeast).